The primary structure comprises 78 residues: Conotoxin Cl14.9 (78 aa).

The signal sequence occupies residues 1–22; that stretch reads MTAKATLLVLALVVMATSGVSS. Residues 23-47 constitute a propeptide that is removed on maturation; the sequence is ASVAGGPVVNSDTVSRSDPERLSTR. Ile-70 is modified (isoleucine amide). Positions 74-78 are excised as a propeptide; sequence DITQQ.

Contains 2 disulfide bonds. As to expression, expressed by the venom duct.

It is found in the secreted. In Californiconus californicus (California cone), this protein is Conotoxin Cl14.9.